Reading from the N-terminus, the 146-residue chain is Large ribosomal subunit protein uL15 (146 aa).

The segment covering 1-13 (MKLHELKPAEGSR) has biased composition (basic and acidic residues). Residues 1-59 (MKLHELKPAEGSRKVRNRVGRGTSSGNGKTSGRGQKGQKARSGGGVRLGFEGGQTPLFR) form a disordered region. 2 stretches are compositionally biased toward gly residues: residues 23 to 35 (TSSG…GRGQ) and 42 to 52 (SGGGVRLGFEG).

Belongs to the universal ribosomal protein uL15 family. As to quaternary structure, part of the 50S ribosomal subunit.

Binds to the 23S rRNA. In Streptococcus agalactiae serotype Ia (strain ATCC 27591 / A909 / CDC SS700), this protein is Large ribosomal subunit protein uL15.